A 426-amino-acid polypeptide reads, in one-letter code: Actin-like protein 6B (426 aa).

The tract at residues 39–82 (TTVGLLAAEEGGGLELEGEKEKKGKIFHIDTNALHVPRDGAEVM) is essential for mediating its function in dendritic development; may contribute to neuronal-specific targeting.

Belongs to the actin family. In terms of assembly, component of the multiprotein chromatin-remodeling complexes SWI/SNF: SWI/SNF-A (BAF), SWI/SNF-B (PBAF) and related complexes. The canonical complex contains a catalytic subunit (either SMARCA4/BRG1/BAF190A or SMARCA2/BRM/BAF190B) and at least SMARCE1, ACTL6A/BAF53, SMARCC1/BAF155, SMARCC2/BAF170, and SMARCB1/SNF5/BAF47. Other subunits specific to each of the complexes may also be present permitting several possible combinations developmentally and tissue specific. Component of the BAF complex, which includes at least actin (ACTB), ARID1A/BAF250A, ARID1B/BAF250B, SMARCA2/BRM, SMARCA4/BRG1/BAF190A, ACTL6A/BAF53, ACTL6B/BAF53B, SMARCE1/BAF57, SMARCC1/BAF155, SMARCC2/BAF170, SMARCB1/SNF5/INI1, and one or more SMARCD1/BAF60A, SMARCD2/BAF60B, or SMARCD3/BAF60C. Component of neuron-specific chromatin remodeling complex (nBAF complex) composed of at least, ARID1A/BAF250A or ARID1B/BAF250B, SMARCD1/BAF60A or SMARCD2/BAF60B or SMARCD3/BAF60C, SMARCA2/BRM/BAF190B, SMARCA4/BRG1/BAF190A, SMARCB1/BAF47, SMARCC1/BAF155, SMARCE1/BAF57, SMARCC2/BAF170, DPF1/BAF45B, DPF3/BAF45C, ACTL6B/BAF53B and actin (ACTB). Note that the nBAF complex is polymorphic in regard to the ATPase, SMARCA2 and SMARCA4 occupying mutually exclusive positions. May be a component of the SWI/SNF-B (PBAF) chromatin remodeling complex, at least composed of SMARCA4/BRG1, SMARCB1/BAF47/SNF5, ACTL6A/BAF53A or ACTL6B/BAF53B, SMARCE1/BAF57, SMARCD1/BAF60A, SMARCD2/BAF60B, perhaps SMARCD3/BAF60C, SMARCC1/BAF155, SMARCC2/BAF170, PBRM1/BAF180, ARID2/BAF200 and actin.

The protein localises to the nucleus. Its function is as follows. Involved in transcriptional activation and repression of select genes by chromatin remodeling (alteration of DNA-nucleosome topology). Component of SWI/SNF chromatin remodeling complexes that carry out key enzymatic activities, changing chromatin structure by altering DNA-histone contacts within a nucleosome in an ATP-dependent manner. Belongs to the neuron-specific chromatin remodeling complex (nBAF complex), as such plays a role in remodeling mononucleosomes in an ATP-dependent fashion, and is required for postmitotic neural development and dendritic outgrowth. During neural development a switch from a stem/progenitor to a postmitotic chromatin remodeling mechanism occurs as neurons exit the cell cycle and become committed to their adult state. The transition from proliferating neural stem/progenitor cells to postmitotic neurons requires a switch in subunit composition of the npBAF and nBAF complexes. As neural progenitors exit mitosis and differentiate into neurons, npBAF complexes which contain ACTL6A/BAF53A and PHF10/BAF45A, are exchanged for homologous alternative ACTL6B/BAF53B and DPF1/BAF45B or DPF3/BAF45C subunits in neuron-specific complexes (nBAF). The npBAF complex is essential for the self-renewal/proliferative capacity of the multipotent neural stem cells. The nBAF complex along with CREST plays a role regulating the activity of genes essential for dendrite growth. ACTL6B/BAF53B is not essential for assembly of the nBAF complex but is required for targeting the complex and CREST to the promoter of genes essential for dendritic growth. Essential for neuronal maturation and dendrite development. This is Actin-like protein 6B (ACTL6B) from Bos taurus (Bovine).